A 338-amino-acid chain; its full sequence is Secretory carrier-associated membrane protein 1 (338 aa).

The segment at 1–63 (MSDFDSNPFA…PNVPSTQPAI (63 aa)) is disordered. Serine 2 is modified (N-acetylserine). Serine 2 carries the post-translational modification Phosphoserine. The Cytoplasmic segment spans residues 2–155 (SDFDSNPFAD…QKTVKIMYYL (154 aa)). Position 45 is a phosphothreonine (threonine 45). The helical transmembrane segment at 156-176 (WMFHAVTLFLNIFGCLAWFCV) threads the bilayer. At 177–181 (DPSRG) the chain is on the lumenal side. The chain crosses the membrane as a helical span at residues 182–202 (VDFGLSILWFLLFTPCSFVCW). The Cytoplasmic portion of the chain corresponds to 203–217 (YRPLYGAFRSDSSFR). Residues 218 to 238 (FFVFFFVYICQFAVHVLQAAG) traverse the membrane as a helical segment. Topologically, residues 239–261 (FHNWGNCGWISSLTGLNQSIPVG) are lumenal. The chain crosses the membrane as a helical span at residues 262-282 (IMMIIIAALFTASAVISLVMF). At 283–338 (KKVHGLYRTTGASFEKAQQEFATGVMSNKTVQTAAANAASTAATSAAQNAFKGNQI) the chain is on the cytoplasmic side.

The protein belongs to the SCAMP family. As to quaternary structure, interacts with SYNRG, ITSN1 and SLC9A7.

The protein resides in the golgi apparatus. It localises to the trans-Golgi network membrane. It is found in the recycling endosome membrane. Its function is as follows. Functions in post-Golgi recycling pathways. Acts as a recycling carrier to the cell surface. This chain is Secretory carrier-associated membrane protein 1 (SCAMP1), found in Sus scrofa (Pig).